Reading from the N-terminus, the 140-residue chain is Inner membrane protein YphA (140 aa).

The Cytoplasmic portion of the chain corresponds to 1–13; the sequence is MNTLRYFDFGAAR. A helical membrane pass occupies residues 14-34; the sequence is PVLLLIARIAVVLIFIIFGFP. Residues 35–56 are Periplasmic-facing; that stretch reads KMMGFDGTVQYMASLGAPMPML. Residues 57–77 form a helical membrane-spanning segment; that stretch reads AAIIAVVMEVPAAILIVLGFF. The Cytoplasmic portion of the chain corresponds to 78-79; that stretch reads TR. Residues 80–100 traverse the membrane as a helical segment; sequence PLAVLFIFYTLGTAVIGHHYW. The Periplasmic portion of the chain corresponds to 101 to 116; it reads DMTGDAVGPNMINFWK. Residues 117–137 form a helical membrane-spanning segment; that stretch reads NVSIAGAFLLLAITGPGAISL. Residues 138–140 lie on the Cytoplasmic side of the membrane; it reads DRR.

This sequence belongs to the DoxX family.

It is found in the cell inner membrane. The polypeptide is Inner membrane protein YphA (yphA) (Escherichia coli (strain K12)).